The following is a 102-amino-acid chain: Small ribosomal subunit protein uS10 (102 aa).

This sequence belongs to the universal ribosomal protein uS10 family. Part of the 30S ribosomal subunit.

In terms of biological role, involved in the binding of tRNA to the ribosomes. The sequence is that of Small ribosomal subunit protein uS10 (rpsJ) from Bacillus subtilis (strain 168).